Consider the following 166-residue polypeptide: Interferon gamma (166 aa).

The first 23 residues, 1-23 (MNYTTICLAFQLCVIFCSSGYYC), serve as a signal peptide directing secretion. At glutamine 24 the chain carries Pyrrolidone carboxylic acid. Residues asparagine 39, asparagine 106, and asparagine 107 are each glycosylated (N-linked (GlcNAc...) asparagine).

Belongs to the type II (or gamma) interferon family. As to quaternary structure, homodimer. Interacts with IFNGR1 (via extracellular domain); this interaction promotes IFNGR1 dimerization.

It is found in the secreted. Type II interferon produced by immune cells such as T-cells and NK cells that plays crucial roles in antimicrobial, antiviral, and antitumor responses by activating effector immune cells and enhancing antigen presentation. Primarily signals through the JAK-STAT pathway after interaction with its receptor IFNGR1 to affect gene regulation. Upon IFNG binding, IFNGR1 intracellular domain opens out to allow association of downstream signaling components JAK2, JAK1 and STAT1, leading to STAT1 activation, nuclear translocation and transcription of IFNG-regulated genes. Many of the induced genes are transcription factors such as IRF1 that are able to further drive regulation of a next wave of transcription. Plays a role in class I antigen presentation pathway by inducing a replacement of catalytic proteasome subunits with immunoproteasome subunits. In turn, increases the quantity, quality, and repertoire of peptides for class I MHC loading. Increases the efficiency of peptide generation also by inducing the expression of activator PA28 that associates with the proteasome and alters its proteolytic cleavage preference. Up-regulates as well MHC II complexes on the cell surface by promoting expression of several key molecules such as cathepsins B/CTSB, H/CTSH, and L/CTSL. Participates in the regulation of hematopoietic stem cells during development and under homeostatic conditions by affecting their development, quiescence, and differentiation. This is Interferon gamma (IFNG) from Mustela putorius furo (European domestic ferret).